A 332-amino-acid polypeptide reads, in one-letter code: MRKPVRIGVLGCASFAWRRMLPAMCDVAETEVVAVASRDPAKAERFAARFECEAVLGYQRLLERPDIDAVYVPLPPGMHAEWIGKALEADKHVLAEKPLTTTASDTARLVGLARRKNLLLRENYLFLHHGRHDVVRDLLQSGEIGELREFTAVFGIPPLPDTDIRYRTELGGGALLDIGVYPARAARHFLLGPLTVLGASSHEAQESGVDLSGSVLLQSEGGTVAHLGYGFVHHYRSAYELWGSRGRIVVDRAFTPPAEWQAVIRIERKGVVDELSLPAEDQVRKAVTAFARDIRAGTGVDDPAVAGDSGESMIQQAALVEAIGQARRCGST.

12 to 18 lines the NADP(+) pocket; the sequence is CASFAWR. Arginine 19 is a binding site for substrate. Residues 37-38, tyrosine 58, leucine 74, and histidine 79 each bind NADP(+); that span reads SR. Lysine 97 (proton donor) is an active-site residue. Residues arginine 165 and aspartate 177 each coordinate NADP(+). Residues tyrosine 235 and threonine 255 each coordinate substrate.

The protein belongs to the Gfo/Idh/MocA family. In terms of assembly, monomer.

It carries out the reaction dTDP-4-dehydro-2,6-dideoxy-alpha-D-glucose + NADP(+) = dTDP-3,4-didehydro-2,6-dideoxy-alpha-D-glucose + NADPH + H(+). Involved in the biosynthesis of forosamine ((4-dimethylamino)-2,3,4,6-tetradeoxy-alpha-D-threo-hexopyranose), a highly deoxygenated sugar component of several bioactive natural products such as the insecticidal spinosyns A and D. Catalyzes the reduction of the C-3 keto moiety of dTDP-3,4-diketo-2,6-dideoxy-alpha-D-glucose to yield dTDP-4-keto-2,6-dideoxy-alpha-D-glucose. NADPH is the better reductant, however NADH can also be used. This Saccharopolyspora spinosa protein is dTDP-3,4-didehydro-2,6-dideoxy-alpha-D-glucose 3-reductase.